A 61-amino-acid chain; its full sequence is Large ribosomal subunit protein bL28 (61 aa).

The protein belongs to the bacterial ribosomal protein bL28 family.

The sequence is that of Large ribosomal subunit protein bL28 from Lactobacillus gasseri (strain ATCC 33323 / DSM 20243 / BCRC 14619 / CIP 102991 / JCM 1131 / KCTC 3163 / NCIMB 11718 / NCTC 13722 / AM63).